A 460-amino-acid polypeptide reads, in one-letter code: Lipase member H-B (460 aa).

The signal sequence occupies residues 1-26; it reads MLLSFYFNGLLLVGCLLSWGRSDTEG. N67 and N75 each carry an N-linked (GlcNAc...) asparagine glycan. S163 serves as the catalytic Nucleophile. N-linked (GlcNAc...) asparagine glycosylation is present at N177. The Charge relay system role is filled by D187. C242 and C255 are oxidised to a cystine. H257 acts as the Charge relay system in catalysis. 2 disulfides stabilise this stretch: C279/C290 and C293/C301. The N-linked (GlcNAc...) asparagine glycan is linked to N289. An N-linked (GlcNAc...) asparagine glycan is attached at N366. C436 and C455 are joined by a disulfide.

Belongs to the AB hydrolase superfamily. Lipase family.

It is found in the secreted. The protein resides in the cell membrane. The enzyme catalyses 1-hexadecanoyl-2-(9Z-octadecenoyl)-sn-glycero-3-phosphate + H2O = 2-(9Z-octadecenoyl)-sn-glycero-3-phosphate + hexadecanoate + H(+). Functionally, hydrolyzes specifically phosphatidic acid (PA) to produce 2-acyl lysophosphatidic acid (LPA; a potent bioactive lipid mediator) and fatty acid. Does not hydrolyze other phospholipids, like phosphatidylserine (PS), phosphatidylcholine (PC) and phosphatidylethanolamine (PE) or triacylglycerol (TG). In Xenopus laevis (African clawed frog), this protein is Lipase member H-B (liph-b).